Here is a 170-residue protein sequence, read N- to C-terminus: 2S seed storage protein 2 (170 aa).

The first 21 residues, 1–21 (MANKLFLVCATFALCFLLTNA), serve as a signal peptide directing secretion. Propeptides lie at residues 22–37 (SIYR…DASN) and 73–88 (GPSL…DIEN).

Belongs to the 2S seed storage albumins family. As to quaternary structure, the mature protein consists of a small and a large chain linked by disulfide bonds.

Functionally, this is a 2S seed storage protein. This Arabidopsis thaliana (Mouse-ear cress) protein is 2S seed storage protein 2 (AT2S2).